Consider the following 648-residue polypeptide: Replication restart protein PriA (648 aa).

Positions 131–297 (TILNESNKPT…EIGKYQLVTL (167 aa)) constitute a Helicase ATP-binding domain. 144–151 (GVTGSGKT) provides a ligand contact to ATP. The DEAH box motif lies at 240–243 (DEEH). Residues C358, C361, C367, C370, C385, C388, C398, and C401 each contribute to the Zn(2+) site. The 156-residue stretch at 393 to 548 (KIFSSCPECL…SFFANELEIR (156 aa)) folds into the Helicase C-terminal domain.

Belongs to the helicase family. PriA subfamily. In terms of assembly, component of the replication restart primosome. Zn(2+) is required as a cofactor.

The enzyme catalyses Couples ATP hydrolysis with the unwinding of duplex DNA by translocating in the 3'-5' direction.. It carries out the reaction ATP + H2O = ADP + phosphate + H(+). Initiates the restart of stalled replication forks, which reloads the replicative helicase on sites other than the origin of replication. Recognizes and binds to abandoned replication forks and remodels them to uncover a helicase loading site. Promotes assembly of the primosome at these replication forks. This Rickettsia conorii (strain ATCC VR-613 / Malish 7) protein is Replication restart protein PriA.